The sequence spans 1529 residues: Protein STU1 (1529 aa).

Disordered regions lie at residues 266-314 (SMGR…DEQI), 617-638 (KPRT…ARKA), 651-745 (KELR…SQGI), and 1070-1090 (SAND…TSPI). Over residues 273-290 (TISSNSSTPASLSSSTMS) the composition is skewed to low complexity. Composition is skewed to polar residues over residues 295–308 (RTNF…ISPS) and 619–634 (RTIT…SSLT). A compositionally biased stretch (low complexity) spans 660–674 (TSISRPSSRINSTSS). Positions 708–723 (TPSTSSLSRVESNQDA) are enriched in polar residues.

This sequence belongs to the CLASP family. As to quaternary structure, interacts with microtubules.

The protein localises to the cytoplasm. Its subcellular location is the cytoskeleton. It localises to the nucleus. It is found in the spindle. Its function is as follows. Microtubule binding protein that promotes the stabilization of dynamic microtubules. Required for mitotic spindle formation. The polypeptide is Protein STU1 (STU1) (Debaryomyces hansenii (strain ATCC 36239 / CBS 767 / BCRC 21394 / JCM 1990 / NBRC 0083 / IGC 2968) (Yeast)).